Consider the following 368-residue polypeptide: tRNA(Met) cytidine acetate ligase (368 aa).

ATP is bound by residues 7–20 (IAEFNPFHNGHKYL), Gly96, Asn152, and Arg175.

Belongs to the TmcAL family.

The protein localises to the cytoplasm. The enzyme catalyses cytidine(34) in elongator tRNA(Met) + acetate + ATP = N(4)-acetylcytidine(34) in elongator tRNA(Met) + AMP + diphosphate. Its function is as follows. Catalyzes the formation of N(4)-acetylcytidine (ac(4)C) at the wobble position of elongator tRNA(Met), using acetate and ATP as substrates. First activates an acetate ion to form acetyladenylate (Ac-AMP) and then transfers the acetyl group to tRNA to form ac(4)C34. This chain is tRNA(Met) cytidine acetate ligase, found in Streptococcus pyogenes serotype M1.